Here is a 461-residue protein sequence, read N- to C-terminus: Na(+)/H(+) antiporter NhaA (461 aa).

The segment at 1-23 is disordered; that stretch reads MILSTQRLGRFMSPAPTPAPDAK. Helical transmembrane passes span 48–68, 89–109, 127–147, 157–177, 186–206, 211–231, 236–256, 257–277, 305–325, 339–359, 374–394, and 408–428; these read VGGA…NSPV, LSLG…LVGL, IVPV…YAAV, GWAI…AIIG, IFLL…IAFF, IQAA…FLAQ, FFGA…IVTW, ALVH…GFAV, ISAG…AVGG, IGII…TTWI, WIDV…SLLV, and HAKV…TVVL.

The protein belongs to the NhaA Na(+)/H(+) (TC 2.A.33) antiporter family.

The protein resides in the cell membrane. The catalysed reaction is Na(+)(in) + 2 H(+)(out) = Na(+)(out) + 2 H(+)(in). Its function is as follows. Na(+)/H(+) antiporter that extrudes sodium in exchange for external protons. This Arthrobacter sp. (strain FB24) protein is Na(+)/H(+) antiporter NhaA.